We begin with the raw amino-acid sequence, 147 residues long: UPF0306 protein YhbP (147 aa).

This sequence belongs to the UPF0306 family.

The polypeptide is UPF0306 protein YhbP (Escherichia coli O1:K1 / APEC).